A 248-amino-acid polypeptide reads, in one-letter code: UPF0246 protein RPR_00055 (248 aa).

The protein belongs to the UPF0246 family.

The protein is UPF0246 protein RPR_00055 of Rickettsia peacockii (strain Rustic).